The primary structure comprises 361 residues: Peptide chain release factor 1 (361 aa).

Position 237 is an N5-methylglutamine (Gln-237). The disordered stretch occupies residues 286-306 (AKQDQEQAAKRKSLVGSGDRS).

The protein belongs to the prokaryotic/mitochondrial release factor family. Methylated by PrmC. Methylation increases the termination efficiency of RF1.

The protein resides in the cytoplasm. Its function is as follows. Peptide chain release factor 1 directs the termination of translation in response to the peptide chain termination codons UAG and UAA. In Coxiella burnetii (strain CbuG_Q212) (Coxiella burnetii (strain Q212)), this protein is Peptide chain release factor 1.